We begin with the raw amino-acid sequence, 280 residues long: Protein MGF 505-3R (280 aa).

This sequence belongs to the asfivirus MGF 505 family.

In terms of biological role, plays a role in virus cell tropism, and may be required for efficient virus replication in macrophages. The chain is Protein MGF 505-3R from African swine fever virus (strain Badajoz 1971 Vero-adapted) (Ba71V).